Reading from the N-terminus, the 118-residue chain is Autophagy-related protein 8D (118 aa).

Glycine 118 carries the Phosphatidylethanolamine amidated glycine lipid modification.

This sequence belongs to the ATG8 family. Interacts with ATG4. In terms of processing, the C-terminal Gly is amidated with phosphatidylethanolamine by an activating system similar to that for ubiquitin.

The protein localises to the cytoplasmic vesicle. The protein resides in the autophagosome membrane. Its subcellular location is the vacuole membrane. It localises to the cytoplasm. It is found in the cytoskeleton. Functionally, ubiquitin-like modifier involved in autophagosomes formation. May mediate the delivery of the autophagosomes to the vacuole via the microtubule cytoskeleton. This chain is Autophagy-related protein 8D (ATG8D), found in Oryza sativa subsp. japonica (Rice).